Consider the following 186-residue polypeptide: UPF0301 protein PM1869 (186 aa).

The protein belongs to the UPF0301 (AlgH) family.

This Pasteurella multocida (strain Pm70) protein is UPF0301 protein PM1869.